We begin with the raw amino-acid sequence, 140 residues long: Cysteine desulfuration protein SufE (140 aa).

Cys-51 (cysteine persulfide intermediate) is an active-site residue.

Belongs to the SufE family. In terms of assembly, homodimer. Interacts with SufS.

Its subcellular location is the cytoplasm. It functions in the pathway cofactor biosynthesis; iron-sulfur cluster biosynthesis. Its function is as follows. Participates in cysteine desulfuration mediated by SufS. Cysteine desulfuration mobilizes sulfur from L-cysteine to yield L-alanine and constitutes an essential step in sulfur metabolism for biosynthesis of a variety of sulfur-containing biomolecules. Functions as a sulfur acceptor for SufS, by mediating the direct transfer of the sulfur atom from the S-sulfanylcysteine of SufS, an intermediate product of cysteine desulfuration process. The sequence is that of Cysteine desulfuration protein SufE from Yersinia pestis bv. Antiqua (strain Antiqua).